The primary structure comprises 129 residues: MKAVTYDTDSELAYIYVLPPKKNRNVRTEELRVNDCLLLDISQDGKIAGFECFGEAAHLCAPFAGKSRLYVKDSDGYHFRVCQHASVRSCYTVYRVTFCFSDGDYQEFAGFDLDGTMYHSAFLQRLTEK.

This is an uncharacterized protein from Bacillus subtilis (strain 168).